The following is a 333-amino-acid chain: Uroporphyrinogen decarboxylase (333 aa).

Substrate is bound by residues 21-25 (RQVGR), aspartate 70, tyrosine 139, serine 194, and histidine 309.

It belongs to the uroporphyrinogen decarboxylase family. Homodimer.

Its subcellular location is the cytoplasm. The catalysed reaction is uroporphyrinogen III + 4 H(+) = coproporphyrinogen III + 4 CO2. It participates in porphyrin-containing compound metabolism; protoporphyrin-IX biosynthesis; coproporphyrinogen-III from 5-aminolevulinate: step 4/4. Its function is as follows. Catalyzes the decarboxylation of four acetate groups of uroporphyrinogen-III to yield coproporphyrinogen-III. The chain is Uroporphyrinogen decarboxylase from Chlamydia abortus (strain DSM 27085 / S26/3) (Chlamydophila abortus).